A 61-amino-acid chain; its full sequence is MAKKSMIAKANRPAKFSSRAYTRCKICGRPHSVYRDFGICRVCLRKLANEGLIPGLKKASW.

Zn(2+) contacts are provided by Cys24, Cys27, Cys40, and Cys43.

This sequence belongs to the universal ribosomal protein uS14 family. Zinc-binding uS14 subfamily. In terms of assembly, part of the 30S ribosomal subunit. Contacts proteins S3 and S10. It depends on Zn(2+) as a cofactor.

Functionally, binds 16S rRNA, required for the assembly of 30S particles and may also be responsible for determining the conformation of the 16S rRNA at the A site. The chain is Small ribosomal subunit protein uS14 from Campylobacter hominis (strain ATCC BAA-381 / DSM 21671 / CCUG 45161 / LMG 19568 / NCTC 13146 / CH001A).